The chain runs to 319 residues: Myoblast determination protein 1 (319 aa).

A Peptide (Met-Gly) (interchain with G-Cter in ubiquitin) cross-link involves residue methionine 1. The residue at position 104 (lysine 104) is an N6-methyllysine; by EHMT2. The bHLH domain occupies 109–160 (DRRKAATMRERRRLSKVNEAFETLKRCTSSNPNQRLPKVEILRNAIRYIEGL). 2 disordered regions span residues 174-221 (AAAA…SGAR) and 266-319 (APAL…YQVL). 2 stretches are compositionally biased toward polar residues: residues 197-207 (SDASSPRSNCS) and 308-319 (ASANPNPIYQVL).

Efficient DNA binding requires dimerization with another bHLH protein. Seems to form active heterodimers with ITF-2. Interacts with SUV39H1. Interacts with DDX5. Interacts with CHD2. Interacts with TSC22D3. Interacts with SETD3. Interacts with P-TEFB complex; promotes the transcriptional activity of MYOD1 through its CDK9-mediated phosphorylation. Interacts with CSRP3. Interacts with NUPR1. In terms of processing, phosphorylated by CDK9. This phosphorylation promotes its function in muscle differentiation. Post-translationally, acetylated by a complex containing EP300 and PCAF. The acetylation is essential to activate target genes. Conversely, its deacetylation by SIRT1 inhibits its function. Ubiquitinated on the N-terminus; which is required for proteasomal degradation. In terms of processing, methylation at Lys-104 by EHMT2/G9a inhibits myogenic activity.

It is found in the nucleus. Its function is as follows. Acts as a transcriptional activator that promotes transcription of muscle-specific target genes and plays a role in muscle differentiation. Together with MYF5 and MYOG, co-occupies muscle-specific gene promoter core region during myogenesis. Induces fibroblasts to differentiate into myoblasts. Interacts with and is inhibited by the twist protein. This interaction probably involves the basic domains of both proteins. The chain is Myoblast determination protein 1 (MYOD1) from Sus scrofa (Pig).